Here is an 888-residue protein sequence, read N- to C-terminus: Extra-large guanine nucleotide-binding protein 1 (888 aa).

Residues 98–119 (SVIEHTEEEEEEEGGDGEDCEL) form a disordered region. Residues 103–118 (TEEEEEEEGGDGEDCE) are compositionally biased toward acidic residues. Residues 205–222 (RRVRVVPVKKQPQTKGKK) carry the Nuclear localization signal motif. The RING-type; degenerate zinc-finger motif lies at 225-268 (CYRCFKGSRFTEKEVCLVCDAKYCNSCVLRAMGSMPEGRKCVTC). In terms of domain architecture, G-alpha spans 482–879 (TLQKILLVGN…NICMSEYSMY (398 aa)). The segment at 485–498 (KILLVGNSGSGTST) is G1 motif. GTP-binding positions include 490 to 498 (GNSGSGTST) and 661 to 669 (DILYAEGVT). Residues Ser497 and Thr669 each coordinate Ca(2+). The tract at residues 661–669 (DILYAEGVT) is G2 motif. The interval 702 to 711 (YQLIRVPSRG) is G3 motif. A G4 motif region spans residues 770 to 777 (LLILNKYD). 774-777 (NKYD) serves as a coordination point for GTP. Positions 843–848 (SKSLDP) are G5 motif.

The protein belongs to the G-alpha family. XLG subfamily. It depends on Ca(2+) as a cofactor. As to expression, ubiquitous. Strongly expressed in vascular tissues, root and shoot meristems and lateral root primordia.

It localises to the nucleus. Functionally, guanine nucleotide-binding proteins (G proteins) are involved as modulators or transducers in various transmembrane signaling systems. Binds GTP with specificity. Plays a role in the root morphogenesis by regulation of the cell proliferation. This is Extra-large guanine nucleotide-binding protein 1 (XLG1) from Arabidopsis thaliana (Mouse-ear cress).